A 194-amino-acid polypeptide reads, in one-letter code: dTTP/UTP pyrophosphatase (194 aa).

D73 acts as the Proton acceptor in catalysis.

Belongs to the Maf family. YhdE subfamily. A divalent metal cation serves as cofactor.

Its subcellular location is the cytoplasm. The catalysed reaction is dTTP + H2O = dTMP + diphosphate + H(+). The enzyme catalyses UTP + H2O = UMP + diphosphate + H(+). Nucleoside triphosphate pyrophosphatase that hydrolyzes dTTP and UTP. May have a dual role in cell division arrest and in preventing the incorporation of modified nucleotides into cellular nucleic acids. This chain is dTTP/UTP pyrophosphatase, found in Clostridium botulinum (strain Loch Maree / Type A3).